The chain runs to 359 residues: Ribosomal RNA small subunit methyltransferase H (359 aa).

Residues Ala-39–His-41, Asp-58, Phe-87, Asp-108, and Gln-115 each bind S-adenosyl-L-methionine. The segment at Ile-339–Gly-359 is disordered. Residues Asn-350–Gly-359 show a composition bias toward basic residues.

The protein belongs to the methyltransferase superfamily. RsmH family.

Its subcellular location is the cytoplasm. It carries out the reaction cytidine(1402) in 16S rRNA + S-adenosyl-L-methionine = N(4)-methylcytidine(1402) in 16S rRNA + S-adenosyl-L-homocysteine + H(+). In terms of biological role, specifically methylates the N4 position of cytidine in position 1402 (C1402) of 16S rRNA. The chain is Ribosomal RNA small subunit methyltransferase H from Bifidobacterium longum (strain DJO10A).